Here is a 350-residue protein sequence, read N- to C-terminus: Biotin synthase (350 aa).

A Radical SAM core domain is found at 54-278 (REIQLSTLLS…TMPQSYVRLS (225 aa)). Cysteine 69, cysteine 73, and cysteine 76 together coordinate [4Fe-4S] cluster. [2Fe-2S] cluster contacts are provided by cysteine 113, cysteine 144, cysteine 204, and arginine 276.

This sequence belongs to the radical SAM superfamily. Biotin synthase family. Homodimer. [4Fe-4S] cluster is required as a cofactor. Requires [2Fe-2S] cluster as cofactor.

The enzyme catalyses (4R,5S)-dethiobiotin + (sulfur carrier)-SH + 2 reduced [2Fe-2S]-[ferredoxin] + 2 S-adenosyl-L-methionine = (sulfur carrier)-H + biotin + 2 5'-deoxyadenosine + 2 L-methionine + 2 oxidized [2Fe-2S]-[ferredoxin]. Its pathway is cofactor biosynthesis; biotin biosynthesis; biotin from 7,8-diaminononanoate: step 2/2. Catalyzes the conversion of dethiobiotin (DTB) to biotin by the insertion of a sulfur atom into dethiobiotin via a radical-based mechanism. This is Biotin synthase from Neisseria meningitidis serogroup B (strain ATCC BAA-335 / MC58).